Reading from the N-terminus, the 249-residue chain is Segregation and condensation protein A (249 aa).

It belongs to the ScpA family. As to quaternary structure, component of a cohesin-like complex composed of ScpA, ScpB and the Smc homodimer, in which ScpA and ScpB bind to the head domain of Smc. The presence of the three proteins is required for the association of the complex with DNA.

The protein resides in the cytoplasm. In terms of biological role, participates in chromosomal partition during cell division. May act via the formation of a condensin-like complex containing Smc and ScpB that pull DNA away from mid-cell into both cell halves. The protein is Segregation and condensation protein A of Listeria monocytogenes serotype 4a (strain HCC23).